We begin with the raw amino-acid sequence, 160 residues long: Transcriptional repressor NrdR (160 aa).

A zinc finger lies at cysteine 3–cysteine 34. Positions leucine 49–aspartate 139 constitute an ATP-cone domain.

Belongs to the NrdR family. Requires Zn(2+) as cofactor.

Its function is as follows. Negatively regulates transcription of bacterial ribonucleotide reductase nrd genes and operons by binding to NrdR-boxes. This chain is Transcriptional repressor NrdR, found in Bartonella quintana (strain Toulouse) (Rochalimaea quintana).